Reading from the N-terminus, the 208-residue chain is Putative 3-methyladenine DNA glycosylase (208 aa).

Belongs to the DNA glycosylase MPG family.

This Lactobacillus delbrueckii subsp. bulgaricus (strain ATCC BAA-365 / Lb-18) protein is Putative 3-methyladenine DNA glycosylase.